A 293-amino-acid polypeptide reads, in one-letter code: Fructose-bisphosphate aldolase class 1 (293 aa).

Residue glutamate 176 is the Proton acceptor of the active site. Lysine 211 (schiff-base intermediate with dihydroxyacetone-P) is an active-site residue.

The protein belongs to the class I fructose-bisphosphate aldolase family.

The catalysed reaction is beta-D-fructose 1,6-bisphosphate = D-glyceraldehyde 3-phosphate + dihydroxyacetone phosphate. It functions in the pathway carbohydrate degradation; glycolysis; D-glyceraldehyde 3-phosphate and glycerone phosphate from D-glucose: step 4/4. The sequence is that of Fructose-bisphosphate aldolase class 1 from Porphyromonas gingivalis (strain ATCC 33277 / DSM 20709 / CIP 103683 / JCM 12257 / NCTC 11834 / 2561).